The sequence spans 328 residues: B3 domain-containing protein At5g60140 (328 aa).

Positions 13–109 (SKFFKPYLPS…FFNFSIFDHE (97 aa)) form a DNA-binding region, TF-B3. Positions 145–221 (LNSDDSDDSD…EDEDDLEDED (77 aa)) are disordered. Acidic residues-rich tracts occupy residues 148-182 (DDSDDSDNDYSVEDDNVAEDDDGLEDEVDVEAEDG) and 190-221 (GLEDEDDDEAEDGYDAKDDDGLEDEDDLEDED).

It localises to the nucleus. The protein is B3 domain-containing protein At5g60140 of Arabidopsis thaliana (Mouse-ear cress).